The primary structure comprises 338 residues: E3 ubiquitin-protein ligase SPL1 (338 aa).

The helical transmembrane segment at 1–21 threads the bilayer; it reads MIHLAGFTCCLGGVALYLLTR. The Chloroplast intermembrane portion of the chain corresponds to 22–223; that stretch reads STGRDIKSIT…KLGDLSRRFK (202 aa). Residues 224–246 form a helical membrane-spanning segment; that stretch reads YASMGLTVLGVILISKPVIEYIL. The Cytoplasmic portion of the chain corresponds to 247–338; the sequence is KRIEDTLERR…IQQVLKIYRH (92 aa). The segment at 291-326 adopts an RING-type zinc-finger fold; the sequence is CVVCLDQKYNTAFVECGHMCCCTPCSLQLRTCPLCR.

It is found in the plastid. It localises to the chloroplast outer membrane. It catalyses the reaction S-ubiquitinyl-[E2 ubiquitin-conjugating enzyme]-L-cysteine + [acceptor protein]-L-lysine = [E2 ubiquitin-conjugating enzyme]-L-cysteine + N(6)-ubiquitinyl-[acceptor protein]-L-lysine.. It functions in the pathway protein modification; protein ubiquitination. Possesses E3 ubiquitin-protein ligase activity. The chain is E3 ubiquitin-protein ligase SPL1 from Arabidopsis thaliana (Mouse-ear cress).